The following is a 631-amino-acid chain: uncharacterized protein (631 aa).

9 consecutive transmembrane segments (helical) span residues 42 to 62 (VLVG…IGGF), 76 to 96 (ALKL…GTLL), 106 to 128 (VLGL…GPAP), 152 to 172 (AGLT…GWLW), 344 to 364 (ALKY…FGFA), 366 to 386 (SYWI…VFTL), 398 to 418 (IGVI…YIAF), 429 to 449 (MLIV…ALVI), and 464 to 484 (IARL…TMLL).

This sequence belongs to the YccS/YhfK family.

The protein localises to the cell membrane. This is an uncharacterized protein from Bacillus subtilis (strain 168).